Here is a 228-residue protein sequence, read N- to C-terminus: Homeobox protein Hox-B6a (228 aa).

Positions 132 to 137 (VYPWMQ) match the Antp-type hexapeptide motif. The homeobox DNA-binding region spans 150–209 (GRRGRQTYTRYQTLELEKEFHFNRYLTRRRRIEIAHALCLTERQIKIWFQNRRMKWKKEN).

Belongs to the Antp homeobox family.

Its subcellular location is the nucleus. Functionally, sequence-specific transcription factor which is part of a developmental regulatory system that provides cells with specific positional identities on the anterior-posterior axis. This is Homeobox protein Hox-B6a (hoxb6a) from Danio rerio (Zebrafish).